Consider the following 123-residue polypeptide: Large ribosomal subunit protein uL14 (123 aa).

The protein belongs to the universal ribosomal protein uL14 family. In terms of assembly, part of the 50S ribosomal subunit. Forms a cluster with proteins L3 and L19. In the 70S ribosome, L14 and L19 interact and together make contacts with the 16S rRNA in bridges B5 and B8.

Its function is as follows. Binds to 23S rRNA. Forms part of two intersubunit bridges in the 70S ribosome. The protein is Large ribosomal subunit protein uL14 of Tropheryma whipplei (strain TW08/27) (Whipple's bacillus).